Consider the following 977-residue polypeptide: Ephrin type-A receptor 1 (977 aa).

An N-terminal signal peptide occupies residues 1–26 (MERRWPLGLALLLLLLCAPLPPGARA). The Extracellular portion of the chain corresponds to 27–548 (EEVTLMDTST…PVSRSLTGGE (522 aa)). Residues 28–210 (EVTLMDTSTA…FYQRCAETVH (183 aa)) form the Eph LBD domain. 2 consecutive Fibronectin type-III domains span residues 333–446 (PPSA…MGHA) and 448–539 (SLSG…TSPP). N-linked (GlcNAc...) asparagine glycans are attached at residues N415 and N479. Residues 549–569 (IVAVIFGLLLGIALLIGIYVF) form a helical membrane-spanning segment. The Cytoplasmic portion of the chain corresponds to 570 to 977 (RSRRGQRQRQ…ILCSIQGFKD (408 aa)). Phosphotyrosine; by autocatalysis occurs at positions 600 and 606. The Protein kinase domain maps to 625-885 (LIVDTVIGEG…QLQAHLEQLL (261 aa)). Residues 631 to 639 (IGEGEFGEV) and K657 contribute to the ATP site. Catalysis depends on D750, which acts as the Proton acceptor. Residue Y782 is modified to Phosphotyrosine; by autocatalysis. Phosphoserine occurs at positions 907 and 911. Residues 914 to 977 (IPYRSVSEWL…ILCSIQGFKD (64 aa)) enclose the SAM domain. The short motif at 975 to 977 (FKD) is the PDZ-binding element.

This sequence belongs to the protein kinase superfamily. Tyr protein kinase family. Ephrin receptor subfamily. Homodimer. Forms a signaling complex with LCK; PTK2B/PYK2 and PI3-kinase upon activation by EFNA1; regulates T-lymphocytes migration. Interacts (via SAM domain) with ILK (via ANK repeats); stimulated by EFNA1 but independent of the kinase activity of EPHA1. Interacts (kinase activity-dependent) with PTK2/FAK1. In terms of processing, phosphorylated. Autophosphorylation is stimulated by its ligand EFNA1. Ubiquitinated. Preferentially expressed in epithelial cells including skin, kidney, liver and thymus. Expressed in myogenic progenitor cells.

The protein resides in the cell membrane. It catalyses the reaction L-tyrosyl-[protein] + ATP = O-phospho-L-tyrosyl-[protein] + ADP + H(+). Functionally, receptor tyrosine kinase which binds promiscuously membrane-bound ephrin-A family ligands residing on adjacent cells, leading to contact-dependent bidirectional signaling into neighboring cells. The signaling pathway downstream of the receptor is referred to as forward signaling while the signaling pathway downstream of the ephrin ligand is referred to as reverse signaling. Binds with a low affinity EFNA3 and EFNA4 and with a high affinity to EFNA1 which most probably constitutes its cognate/functional ligand. Upon activation by EFNA1 induces cell attachment to the extracellular matrix inhibiting cell spreading and motility through regulation of ILK and downstream RHOA and RAC. Also plays a role in angiogenesis and regulates cell proliferation. May play a role in apoptosis. The polypeptide is Ephrin type-A receptor 1 (Epha1) (Mus musculus (Mouse)).